The sequence spans 723 residues: MSQTITQGRLRIDANFKRFVDGEVLPGVELDAAAFWHNVDEIVHDLAPENRQLLAERDRIQAALDEWHRSNPGPVKDKAAYKSFLRELGYLVPQPERVTVETTGIDSEITSQAGPQLVVPAMNARYALNAANARWGSLYDALYGSDIIPQEGAMVSGYDPQRGEQVIAWVRRFLDESLPLENGSYQDVVAFKVVDKQLRIQLKNGKETTLRTPAQFVGYRGDAAAPTCILLKNNGLHIELQIDANGRIGKDDPAHINDVIVEAAISTILDCEDSVAAVDAEDKILLYRNLLGLMQGTLQEKMEKNGRQIVRKLNDDRQYTAADGSEISLHGRSLLFIRNVGHLMTIPVIWDSEGNEIPEGILDGVMTGAIALYDLKVQKNSRTGSVYIVKPKMHGPQEVAFANKLFTRIETMLGMAPNTLKMGIMDEERRTSLNLRSCIAQARNRVAFINTGFLDRTGDEMHSVMEAGPMLRKNQMKSTPWIKAYERNNVLSGLFCGLRGKAQIGKGMWAMPDLMADMYSQKGDQLRAGANTAWVPSPTAATLHALHYHHTNVQSVQANIAQTEFSAEFEPLLDDLLTIPVAENANWSAQEIQQELDNNVQGILGYVVRWVEQGIGCSKVPDIHNVALMEDRATLRISSQHIANWLRHGILTKEQVQASLENMAKVVDQQNAGDPAYRPMAGNFANSCAFKAASDLIFLGVKQPNGYTEPLLHAWRLREKESH.

Residues valine 118, 125 to 126 (RY), serine 274, and arginine 311 each bind acetyl-CoA. Residue arginine 338 is the Proton acceptor of the active site. Residues arginine 338, glutamate 427, and 452 to 455 (GFLD) contribute to the glyoxylate site. Residues glutamate 427 and aspartate 455 each contribute to the Mg(2+) site. Proline 536 is an acetyl-CoA binding site. Position 617 is a cysteine sulfenic acid (-SOH) (cysteine 617). Aspartate 631 (proton donor) is an active-site residue. At cysteine 688 the chain carries Cysteine sulfenic acid (-SOH).

Belongs to the malate synthase family. GlcB subfamily. Monomer. Mg(2+) serves as cofactor.

Its subcellular location is the cytoplasm. The enzyme catalyses glyoxylate + acetyl-CoA + H2O = (S)-malate + CoA + H(+). It functions in the pathway carbohydrate metabolism; glyoxylate cycle; (S)-malate from isocitrate: step 2/2. Its function is as follows. Involved in the glycolate utilization. Catalyzes the condensation and subsequent hydrolysis of acetyl-coenzyme A (acetyl-CoA) and glyoxylate to form malate and CoA. This chain is Malate synthase G, found in Shigella flexneri.